A 171-amino-acid polypeptide reads, in one-letter code: Anthrone oxygenase dmxR16 (171 aa).

Transmembrane regions (helical) follow at residues 21 to 41, 67 to 87, and 96 to 116; these read VIAA…ISMI, GHII…FSAL, and YALA…FMTP. Asn-118 and Asn-129 each carry an N-linked (GlcNAc...) asparagine glycan. The helical transmembrane segment at 145 to 165 threads the bilayer; sequence WLHATRSMFPLIGAILGFTGI.

This sequence belongs to the anthrone oxygenase family.

It localises to the membrane. The enzyme catalyses emodin anthrone + O2 = emodin + H2O + H(+). It functions in the pathway secondary metabolite biosynthesis. In terms of biological role, anthrone oxygenase; part of the gene cluster that mediates the biosynthesis of the dimeric xanthones cryptosporioptides. The pathway begins with the synthesis of atrochrysone thioester by the polyketide synthase dmx-nrPKS. The atrochrysone carboxyl ACP thioesterase dmxR1 then breaks the thioester bond and releases the atrochrysone carboxylic acid from dmx-nrPKS. Atrochrysone carboxylic acid is decarboxylated by the decarboxylase dmxR15, and oxidized by the anthrone oxygenase dmxR16 to yield emodin. Emodin is then reduced to emodin hydroquinone by the oxidoreductase dmxR7. A-ring reduction by the short chain dehydrogenase dmxR18, dehydration by the scytalone dehydratase-like protein dmxR17 and probable spontaneous re-oxidation, results in overall deoxygenation to chrysophanol. Baeyer-Villiger oxidation by the Baeyer-Villiger monooxygenase (BVMO) dmxR6 then yields monodictylactone in equilibrium with monodictyphenone. In the case of the cryptosporioptides biosynthesis, monodictylactone is reduced at C-12 to an alcohol (by the short chain dehydrogenases dmxR12 or dmxR8) and hydroxylated at C-5 by dmxR9, yielding the electron-rich aromatic which could eliminate H(2)O to form the ortho-quinonemethide, followed by tautomerisation to paraquinone and complete the formal reduction to produce the 10-methylgroup. Conjugate addition of C-4a-OH to the resulting paraquinone by the monooxygenase dmxR10 then gives cyclohexadienone, which is then reduced at C-5 by the short chain dehydrogenase dmxR3 to give the dihydroxanthone. The 6,7-epoxide in the cryptosporioptides could be introduced by the cytochrome P450 monooxygenase dmxL3. The highly reducing PKS dmxL2 manufactures butyrate, which is further carboxylated by dmxL1 to form ethylmalonate. It is not yet clear whether the carboxylation occurs while the butyrate is attached to the ACP of dmxL2, but this unusual fungal metabolite could then be esterified to O-5 by the O-acetyltransferase dmxR13. Finally, dimerization performed by dmxR5 gives the observed dimers cryptosporioptides A, B and C as the final products of the pathway. This is Anthrone oxygenase dmxR16 from Cryptosporiopsis sp. (strain 8999).